The following is a 503-amino-acid chain: MEFSVKSGSPEKQRSACIVVGVFEPRRLSPIAEQLDKISDGYISALLRRGELEGKVGQTLLLHHVPNILSERILLIGCGKERELDERQYKQVIQKTINTLNDTGSMEAVCFLTELHVKGRNTYWKVRQAVETAKETLYTFDQLKSNKVEPRRPLRKMVFNVPTRRELTSGERAIQHGLAVSSGIKAAKDLGNMPPNICNAGYLASQARQLADAFSTNITTRVIGEQQMKELGMNAYLAVGAGSRNESLMSVMEYKGNPNPDAKPIVLVGKGLTFDAGGISIKPAEGMDEMKYDMCGAATVYGVMRVVAELNLPLNVIGVLAGCENMPGGSAYRPGDVLTTMSGQTVEVLNTDAEGRLVLCDTLTYVERFDPELVIDVATLTGACVIALGHHITGLMSNHNPLAHELIGASEQAGDRAWRLPMSDEYYEQLDSNFADMANIGGRPGGAITAACFLSRFTRKYSWAHLDIAGTAWRSGKAKGATGRPVALLSQFLLNRAGLNGDD.

Lys270 and Asp275 together coordinate Mn(2+). The active site involves Lys282. Residues Asp293, Asp352, and Glu354 each coordinate Mn(2+). Arg356 is a catalytic residue.

It belongs to the peptidase M17 family. Mn(2+) is required as a cofactor.

It localises to the cytoplasm. It catalyses the reaction Release of an N-terminal amino acid, Xaa-|-Yaa-, in which Xaa is preferably Leu, but may be other amino acids including Pro although not Arg or Lys, and Yaa may be Pro. Amino acid amides and methyl esters are also readily hydrolyzed, but rates on arylamides are exceedingly low.. The catalysed reaction is Release of an N-terminal amino acid, preferentially leucine, but not glutamic or aspartic acids.. Functionally, presumably involved in the processing and regular turnover of intracellular proteins. Catalyzes the removal of unsubstituted N-terminal amino acids from various peptides. The polypeptide is Probable cytosol aminopeptidase (Serratia proteamaculans (strain 568)).